The primary structure comprises 160 residues: Transcription elongation factor GreA (160 aa).

Residues 11–38 adopt a coiled-coil conformation; sequence YDRLMKELERLKSERPAIIQAIKEAREE.

Belongs to the GreA/GreB family.

In terms of biological role, necessary for efficient RNA polymerase transcription elongation past template-encoded arresting sites. The arresting sites in DNA have the property of trapping a certain fraction of elongating RNA polymerases that pass through, resulting in locked ternary complexes. Cleavage of the nascent transcript by cleavage factors such as GreA or GreB allows the resumption of elongation from the new 3'terminus. GreA releases sequences of 2 to 3 nucleotides. The chain is Transcription elongation factor GreA from Nitratidesulfovibrio vulgaris (strain DSM 19637 / Miyazaki F) (Desulfovibrio vulgaris).